The chain runs to 157 residues: Cyclic pyranopterin monophosphate synthase (157 aa).

Substrate contacts are provided by residues 75–77 (LCH) and 111–112 (ME). Residue D126 is part of the active site.

This sequence belongs to the MoaC family. As to quaternary structure, homohexamer; trimer of dimers.

It carries out the reaction (8S)-3',8-cyclo-7,8-dihydroguanosine 5'-triphosphate = cyclic pyranopterin phosphate + diphosphate. Its pathway is cofactor biosynthesis; molybdopterin biosynthesis. Catalyzes the conversion of (8S)-3',8-cyclo-7,8-dihydroguanosine 5'-triphosphate to cyclic pyranopterin monophosphate (cPMP). This is Cyclic pyranopterin monophosphate synthase from Novosphingobium aromaticivorans (strain ATCC 700278 / DSM 12444 / CCUG 56034 / CIP 105152 / NBRC 16084 / F199).